The chain runs to 577 residues: Zinc finger protein 384 (577 aa).

Residues 171–225 form a disordered region; it reads TLTEEGGGGGGGGGSVAPKPPRGRKKKRMLESGLPEMNDPYVLSPEDDDDHQKDG. Residues 175–185 show a composition bias toward gly residues; sequence EGGGGGGGGGS. Serine 214 is modified (phosphoserine). C2H2-type zinc fingers lie at residues 228 to 250, 256 to 278, 284 to 306, 317 to 339, 345 to 367, 373 to 397, 403 to 425, and 433 to 455; these read YRCR…SKSH, HKCP…IRIH, YSCN…TRIH, HKCP…LRIH, YNCS…TRIH, YKCA…RRQH, FKCH…LSTH, and YTCT…MRKH. Positions 501 to 515 are enriched in low complexity; the sequence is QQQQQQQQQQQQQQQ. The segment at 501–550 is disordered; the sequence is QQQQQQQQQQQQQQQQPPPHFQSPGAAPQGGGGGDSNPNPPPQCSFDLTP.

The protein belongs to the krueppel C2H2-type zinc-finger protein family. As to quaternary structure, interacts with BCAR1.

The protein resides in the nucleus. In terms of biological role, transcription factor that binds the consensus DNA sequence [GC]AAAAA. Seems to bind and regulate the promoters of MMP1, MMP3, MMP7 and COL1A1. In Homo sapiens (Human), this protein is Zinc finger protein 384 (ZNF384).